The sequence spans 162 residues: uncharacterized protein (162 aa).

An HTH asnC-type domain is found at 6–99 (LDDLDRAILK…YVTKTLSGFP (94 aa)). The H-T-H motif DNA-binding region spans 25–44 (IAEISNQLKKPESTVHFRIK).

This is an uncharacterized protein from Pyrococcus horikoshii (strain ATCC 700860 / DSM 12428 / JCM 9974 / NBRC 100139 / OT-3).